Here is a 164-residue protein sequence, read N- to C-terminus: UPF0262 protein Nham_0287 (164 aa).

This sequence belongs to the UPF0262 family.

This chain is UPF0262 protein Nham_0287, found in Nitrobacter hamburgensis (strain DSM 10229 / NCIMB 13809 / X14).